Here is a 133-residue protein sequence, read N- to C-terminus: Capsid protein (133 aa).

This sequence belongs to the Leviviricetes capsid protein family. As to quaternary structure, homodimer. The homodimers binds to the viral RNA via an operator hairpin, but also to many other RNA sequences in the viral genome; this interaction probably shifts the virus from the replicative to the assembly phase and ensures specific encapsidation of the viral genome. Interacts with the maturation protein A2.

The protein resides in the virion. Capsid protein self-assembles to form an icosahedral capsid with a T=3 symmetry, about 26 nm in diameter, and consisting of 89 capsid proteins dimers (178 capsid proteins). Involved in viral genome encapsidation through the interaction between a capsid protein dimer and the multiple packaging signals present in the RNA genome. Binding of the capsid proteins to the viral RNA induces a conformational change required for efficient T=3 shell formation. The capsid also contains 1 copy of the A2 maturation protein. Functionally, acts as a translational repressor of viral replicase synthesis late in infection. This latter function is the result of capsid protein interaction with an RNA hairpin which contains the replicase ribosome-binding site. This is Capsid protein from Escherichia virus Qbeta (Bacteriophage Q-beta).